The chain runs to 181 residues: Der GTPase-activating protein YihI (181 aa).

The disordered stretch occupies residues Met1 to Ile73. Residues Asn22 to Glu32 are compositionally biased toward basic and acidic residues. The segment covering Ile33–Leu42 has biased composition (basic residues). The segment covering Gln55–Ile67 has biased composition (basic and acidic residues).

It belongs to the YihI family. As to quaternary structure, interacts with Der.

Its function is as follows. A GTPase-activating protein (GAP) that modifies Der/EngA GTPase function. May play a role in ribosome biogenesis. This Aliivibrio fischeri (strain ATCC 700601 / ES114) (Vibrio fischeri) protein is Der GTPase-activating protein YihI.